The primary structure comprises 501 residues: Postreplication repair E3 ubiquitin-protein ligase rad18 (501 aa).

Residues 34–72 form an RING-type zinc finger; sequence CHVCKDFYDSPMLTSCNHTFCSLCIRRCLSVDSKCPLCR. Residues 111–154 are disordered; the sequence is QAILPDQAGPSSPSKRKATEMEGPKEEDPESKRPRRSTRSTRAR. A compositionally biased stretch (basic and acidic residues) spans 127 to 142; the sequence is KATEMEGPKEEDPESK. The span at 143 to 152 shows a compositional bias: basic residues; that stretch reads RPRRSTRSTR. A UBZ4-type zinc finger spans residues 186 to 214; that stretch reads LVACPICLTRMKEQQVDRHLDTSCPGSPQ. Residues C189, C192, H204, and C209 each coordinate Zn(2+). The disordered stretch occupies residues 203 to 250; the sequence is RHLDTSCPGSPQAASKRRPIPAQTPQPSTFPSFNTRLTSQTNQKPPER. Positions 225–246 are enriched in polar residues; sequence QTPQPSTFPSFNTRLTSQTNQK. The region spanning 256 to 290 is the SAP domain; the sequence is YSMLRDTALRKKLSELGLSTHGSRQLLEKRHKEWI. The tract at residues 377 to 501 is disordered; it reads IKRQTLDGNG…GMKKPNPETC (125 aa).

This sequence belongs to the RAD18 family. In terms of assembly, interacts with E2 mus-8/ubc2, forming a complex with ubiquitin ligase activity.

The protein localises to the nucleus. It carries out the reaction S-ubiquitinyl-[E2 ubiquitin-conjugating enzyme]-L-cysteine + [acceptor protein]-L-lysine = [E2 ubiquitin-conjugating enzyme]-L-cysteine + N(6)-ubiquitinyl-[acceptor protein]-L-lysine.. It participates in protein modification; protein ubiquitination. E3 RING-finger protein, member of the UBC2/RAD6 epistasis group. Associates to the E2 ubiquitin conjugating enzyme mus-8/ubc2 to form the mus-8/ubc2-uvs-2/rad18 ubiquitin ligase complex involved in postreplicative repair (PRR) of damaged DNA. The sequence is that of Postreplication repair E3 ubiquitin-protein ligase rad18 (uvs-2) from Neurospora crassa (strain ATCC 24698 / 74-OR23-1A / CBS 708.71 / DSM 1257 / FGSC 987).